Consider the following 890-residue polypeptide: Alanine--tRNA ligase (890 aa).

4 residues coordinate Zn(2+): H568, H572, C680, and H684.

This sequence belongs to the class-II aminoacyl-tRNA synthetase family. Zn(2+) is required as a cofactor.

The protein localises to the cytoplasm. The catalysed reaction is tRNA(Ala) + L-alanine + ATP = L-alanyl-tRNA(Ala) + AMP + diphosphate. Functionally, catalyzes the attachment of alanine to tRNA(Ala) in a two-step reaction: alanine is first activated by ATP to form Ala-AMP and then transferred to the acceptor end of tRNA(Ala). Also edits incorrectly charged Ser-tRNA(Ala) and Gly-tRNA(Ala) via its editing domain. The protein is Alanine--tRNA ligase of Psychrobacter cryohalolentis (strain ATCC BAA-1226 / DSM 17306 / VKM B-2378 / K5).